Consider the following 347-residue polypeptide: Ribosomal RNA small subunit methyltransferase H (347 aa).

S-adenosyl-L-methionine contacts are provided by residues 50–52 (GGH), Asp69, Phe96, Asp125, and Gln132.

The protein belongs to the methyltransferase superfamily. RsmH family.

It is found in the cytoplasm. The enzyme catalyses cytidine(1402) in 16S rRNA + S-adenosyl-L-methionine = N(4)-methylcytidine(1402) in 16S rRNA + S-adenosyl-L-homocysteine + H(+). Functionally, specifically methylates the N4 position of cytidine in position 1402 (C1402) of 16S rRNA. The chain is Ribosomal RNA small subunit methyltransferase H from Corynebacterium aurimucosum (strain ATCC 700975 / DSM 44827 / CIP 107346 / CN-1) (Corynebacterium nigricans).